Reading from the N-terminus, the 305-residue chain is MPWIQIKIITSKQHDNLLETLLLETGAVSVTFQDAGDQPIFEPLPGELKFWDDIEIAGLYEADNNLHEHQTKIAAAINKIKAMCEPGQHFIYKIEHLEDKQWEREWMIHFHPMRFGQRLWVCPSMQAVPDPSAVNVILDPGLAFGTGTHPTTALCLEWLDSLDLQNKILIDFGCGSGILAIAALKLGAKQAIGIDIDPQAIEASRDNAQRNGVSEHLVLYLSGQEPKNLQADVVVANILAAPLCELAGVIADLVKPDGYLGLSGILNTQSDKVSQAYQHAFCLYPIAEKEEWCRITAVKNKNDGI.

S-adenosyl-L-methionine-binding residues include T152, G173, D195, and N237.

The protein belongs to the methyltransferase superfamily. PrmA family.

Its subcellular location is the cytoplasm. It carries out the reaction L-lysyl-[protein] + 3 S-adenosyl-L-methionine = N(6),N(6),N(6)-trimethyl-L-lysyl-[protein] + 3 S-adenosyl-L-homocysteine + 3 H(+). Methylates ribosomal protein L11. This Hamiltonella defensa subsp. Acyrthosiphon pisum (strain 5AT) protein is Ribosomal protein L11 methyltransferase.